Consider the following 885-residue polypeptide: Translation initiation factor IF-2 (885 aa).

Disordered regions lie at residues 55–150 (IPDK…ADVT) and 269–300 (NTINSFGEGGIQRRARKKHKKPENKQNSEAVT). Residues 65–146 (EPKAKKEPKK…AEAPKPKESL (82 aa)) show a composition bias toward basic and acidic residues. Residues 281–290 (RRARKKHKKP) show a composition bias toward basic residues. Positions 384 to 553 (PRAPVITIMG…LLQADLLELK (170 aa)) constitute a tr-type G domain. The interval 393–400 (GHVDHGKT) is G1. 393 to 400 (GHVDHGKT) contacts GTP. The G2 stretch occupies residues 418 to 422 (GITQH). A G3 region spans residues 439 to 442 (DTPG). GTP contacts are provided by residues 439–443 (DTPGH) and 493–496 (NKMD). The tract at residues 493 to 496 (NKMD) is G4. Residues 529 to 531 (SAK) are G5.

It belongs to the TRAFAC class translation factor GTPase superfamily. Classic translation factor GTPase family. IF-2 subfamily.

It is found in the cytoplasm. In terms of biological role, one of the essential components for the initiation of protein synthesis. Protects formylmethionyl-tRNA from spontaneous hydrolysis and promotes its binding to the 30S ribosomal subunits. Also involved in the hydrolysis of GTP during the formation of the 70S ribosomal complex. The protein is Translation initiation factor IF-2 of Campylobacter concisus (strain 13826).